The primary structure comprises 363 residues: Cyanuric acid amidohydrolase (363 aa).

The RU A stretch occupies residues 1–103; that stretch reads MKTRVTRLTV…LVFEVDDSAP (103 aa). Residues Arg-51 and 82-83 contribute to the substrate site; that span reads SG. Positions 111 to 247 are RU B; it reads GLAAGVAFTR…NEVLVLGNAP (137 aa). The active site involves Lys-161. Substrate is bound by residues Arg-193 and 230-231; that span reads SA. The Nucleophile role is filled by Ser-230. The interval 253-363 is RU C; that stretch reads YRIGHAVMED…GGPLALIVRS (111 aa). A Mg(2+)-binding site is contributed by Glu-297. Substrate contacts are provided by residues Arg-324 and 343–344; that span reads SG. Positions 346, 349, 350, 351, and 354 each coordinate Mg(2+).

It belongs to the cyclic amide hydrolase (CyAH) family. Homotetramer.

The catalysed reaction is cyanurate + H2O = 1-carboxybiuret + H(+). Its pathway is xenobiotic degradation; atrazine degradation; biuret from cyanurate: step 1/1. Its activity is regulated as follows. Inhibited by barbituric acid. Its function is as follows. Responsible for the hydrolysis of cyanuric acid, an intermediate formed during catabolism of s-triazine based compounds in herbicides such as atrazine and polymers such as melamine. Catalyzes the hydrolytic opening of the s-triazine ring of cyanuric acid (2,4,6-trihydroxy-s-triazine) to yield carbon dioxide and carboxybiuret, which spontaneously decarboxylates to biuret. This Ectopseudomonas oleovorans (strain CECT 5344) (Pseudomonas pseudoalcaligenes) protein is Cyanuric acid amidohydrolase.